The sequence spans 391 residues: Processive diacylglycerol beta-glucosyltransferase (391 aa).

It belongs to the glycosyltransferase 28 family. UgtP subfamily.

Its subcellular location is the cell membrane. It catalyses the reaction a 1,2-diacyl-3-O-(beta-D-glucopyranosyl)-sn-glycerol + UDP-alpha-D-glucose = a 1,2-diacyl-3-O-(beta-D-Glc-(1-&gt;6)-beta-D-Glc)-sn-glycerol + UDP + H(+). It carries out the reaction a 1,2-diacyl-sn-glycerol + UDP-alpha-D-glucose = a 1,2-diacyl-3-O-(beta-D-glucopyranosyl)-sn-glycerol + UDP + H(+). It functions in the pathway glycolipid metabolism; diglucosyl-diacylglycerol biosynthesis. Processive glucosyltransferase involved in the biosynthesis of both the bilayer- and non-bilayer-forming membrane glucolipids. Is able to successively transfer two glucosyl residues to diacylglycerol (DAG), thereby catalyzing the formation of beta-monoglucosyl-DAG (3-O-(beta-D-glucopyranosyl)-1,2-diacyl-sn-glycerol) and beta-diglucosyl-DAG (3-O-(beta-D-glucopyranosyl-beta-(1-&gt;6)-D-glucopyranosyl)-1,2-diacyl-sn-glycerol). Beta-diglucosyl-DAG is the predominant glycolipid found in Bacillales and is also used as a membrane anchor for lipoteichoic acid (LTA). The sequence is that of Processive diacylglycerol beta-glucosyltransferase from Staphylococcus aureus (strain Mu3 / ATCC 700698).